Reading from the N-terminus, the 262-residue chain is Hydroxyethylthiazole kinase (262 aa).

Substrate is bound at residue methionine 50. Residues arginine 125 and threonine 171 each coordinate ATP. Glycine 198 contributes to the substrate binding site.

Belongs to the Thz kinase family. Requires Mg(2+) as cofactor.

It catalyses the reaction 5-(2-hydroxyethyl)-4-methylthiazole + ATP = 4-methyl-5-(2-phosphooxyethyl)-thiazole + ADP + H(+). The protein operates within cofactor biosynthesis; thiamine diphosphate biosynthesis; 4-methyl-5-(2-phosphoethyl)-thiazole from 5-(2-hydroxyethyl)-4-methylthiazole: step 1/1. Functionally, catalyzes the phosphorylation of the hydroxyl group of 4-methyl-5-beta-hydroxyethylthiazole (THZ). In Escherichia coli O6:H1 (strain CFT073 / ATCC 700928 / UPEC), this protein is Hydroxyethylthiazole kinase.